Consider the following 562-residue polypeptide: Serine/threonine-protein kinase STN7, chloroplastic (562 aa).

A chloroplast-targeting transit peptide spans 1–45; it reads MATISPGGAYIGTPSPFLGKKLKPFSLTSPILSFKPTVKLNSSCR. In terms of domain architecture, Protein kinase spans 134–452; the sequence is FVVGKKLGEG…AKAALAHPYF (319 aa). ATP is bound by residues 140-148 and lysine 167; that span reads LGEGSFGVV. Aspartate 279 functions as the Proton acceptor in the catalytic mechanism. Serine 526 bears the Phosphoserine mark. Threonine 537 and threonine 541 each carry phosphothreonine.

It belongs to the protein kinase superfamily. Ser/Thr protein kinase family. Phosphorylated.

Its subcellular location is the plastid. It is found in the chloroplast thylakoid membrane. The enzyme catalyses L-seryl-[protein] + ATP = O-phospho-L-seryl-[protein] + ADP + H(+). The catalysed reaction is L-threonyl-[protein] + ATP = O-phospho-L-threonyl-[protein] + ADP + H(+). Functionally, serine/threonine protein kinase required for state transition by phosphorylating light-harvesting complex II outer antennae (LCHII). State transition plays a central role in response to environmental changes and allows to adjust to changing light conditions via the redistribution of light excitation energy between photosystem II (PSII) and photosystem I (PSI). Phosphorylates the minor light harvesting protein LHCB4.2/CP29 and is involved in the light-dependent phosphorylation of TSP9. Acts as a key component of the long-term response (LTR) signaling pathway. Mediates phosphorylation-dependent PTAC16 subcellular localization to regulate plastid gene expression. In Arabidopsis thaliana (Mouse-ear cress), this protein is Serine/threonine-protein kinase STN7, chloroplastic (STN7).